Reading from the N-terminus, the 370-residue chain is Vasopressin V2 receptor (370 aa).

Residues 1–28 (MLRATTSAVPRALSWPAAPGNGSEREPL) are disordered. Over 1-37 (MLRATTSAVPRALSWPAAPGNGSEREPLDDRDPLLAR) the chain is Extracellular. N-linked (GlcNAc...) asparagine glycosylation occurs at Asn21. A helical transmembrane segment spans residues 38–62 (VELALLSTVFVAVALSNGLVLGALV). The Cytoplasmic portion of the chain corresponds to 63–76 (RRGRRGRWAPMHVF). The chain crosses the membrane as a helical span at residues 77–97 (IGHLCLADLAVALFQVLPQLA). At 98–112 (WDATYRFRGPDALCR) the chain is on the extracellular side. A helical membrane pass occupies residues 113 to 134 (AVKYLQMVGMYASSYMILAMTL). The Cytoplasmic segment spans residues 135 to 158 (DRHRAICRPMLAYRHGGGARWNRP). The helical transmembrane segment at 159–179 (VLVAWAFSLLLSLPQLFIFAQ) threads the bilayer. The Extracellular segment spans residues 180 to 199 (RDVGDGSGVLDCWASFAEPW). Residues 200–219 (GLRAYVTWIALMVFVAPALG) form a helical membrane-spanning segment. The Cytoplasmic portion of the chain corresponds to 220 to 270 (IAACQVLIFREIHTSLVPGPAERAGGHRGGRRAGSPREGARVSAAMAKTAR). The helical transmembrane segment at 271-292 (MTLVIVAVYVLCWAPFFLVQLW) threads the bilayer. Residues 293 to 307 (SVWDPKAPREGPPFV) are Extracellular-facing. A helical membrane pass occupies residues 308-327 (LLMLLASLNSCTNPWIYASF). Over 328 to 370 (SSSISSELRSLLCCPRRRTPPSLRPQEESCATASSFSARDTSS) the chain is Cytoplasmic. Residues Cys340 and Cys341 are each lipidated (S-palmitoyl cysteine). The tract at residues 347 to 370 (PPSLRPQEESCATASSFSARDTSS) is disordered. The segment covering 356–370 (SCATASSFSARDTSS) has biased composition (polar residues).

Belongs to the G-protein coupled receptor 1 family. Vasopressin/oxytocin receptor subfamily. In terms of assembly, interacts with ARRDC4. Identified in a complex containing at least ARRDC4, V2R and HGS. Interacts with TMEM147.

The protein localises to the cell membrane. Receptor for arginine vasopressin. The activity of this receptor is mediated by G proteins which activate adenylate cyclase. Involved in renal water reabsorption. The sequence is that of Vasopressin V2 receptor (AVPR2) from Sus scrofa (Pig).